A 359-amino-acid polypeptide reads, in one-letter code: Palmitoyltransferase ERF2 (359 aa).

Positions 1 to 21 (MALVSRRSTRSESTSITKEEH) are disordered. The Cytoplasmic segment spans residues 1–75 (MALVSRRSTR…RFRTVKGAKP (75 aa)). A helical transmembrane segment spans residues 76-96 (LWLGVLLAIVCPMVLFSIFEA). The Lumenal portion of the chain corresponds to 97–104 (HKLWHTQN). A helical membrane pass occupies residues 105-125 (GYKVLVIFFYYFWVITLASFI). The Cytoplasmic segment spans residues 126-217 (RTATSDPGVL…NCIGKRNYRF (92 aa)). The DHHC domain occupies 173 to 223 (KYCPSCRIWRPPRSSHCSTCNVCVMVHDHHCIWVNNCIGKRNYRFFLIFLL). Catalysis depends on C203, which acts as the S-palmitoyl cysteine intermediate. A helical membrane pass occupies residues 218 to 238 (FLIFLLGAILSSVILLTNCAI). The Lumenal segment spans residues 239 to 250 (HIARESGGPRDC). The helical transmembrane segment at 251–271 (PVAILLLCYAGLTLWYPAILF) threads the bilayer. Residues 272–359 (TYHIFMAGNQ…AHSFEKIQKI (88 aa)) are Cytoplasmic-facing.

It belongs to the DHHC palmitoyltransferase family. ERF2/ZDHHC9 subfamily. In terms of assembly, interacts with SHR5. Autopalmitoylated.

It localises to the endoplasmic reticulum membrane. The enzyme catalyses L-cysteinyl-[protein] + hexadecanoyl-CoA = S-hexadecanoyl-L-cysteinyl-[protein] + CoA. In terms of biological role, the ERF2-SHR5 complex is a palmitoyltransferase specific for Ras proteins. Palmitoylates RAS2, which is required for its proper plasma membrane localization. In Saccharomyces cerevisiae (strain ATCC 204508 / S288c) (Baker's yeast), this protein is Palmitoyltransferase ERF2 (ERF2).